Here is an 83-residue protein sequence, read N- to C-terminus: Small ribosomal subunit protein uS17 (83 aa).

The protein belongs to the universal ribosomal protein uS17 family. Part of the 30S ribosomal subunit.

In terms of biological role, one of the primary rRNA binding proteins, it binds specifically to the 5'-end of 16S ribosomal RNA. This is Small ribosomal subunit protein uS17 from Campylobacter concisus (strain 13826).